A 321-amino-acid chain; its full sequence is uncharacterized protein (321 aa).

The region spanning 130 to 314 (NLVYDLETTG…NDVDALIKIM (185 aa)) is the Exonuclease domain.

This is an uncharacterized protein from Acanthamoeba polyphaga (Amoeba).